Reading from the N-terminus, the 383-residue chain is Opsin Rh4 (383 aa).

The Extracellular portion of the chain corresponds to 1 to 57; the sequence is MDIAGSLCNASEGPVLRPEARVSGNGDLQFLGWNVPPDQIQHIPEHWLTQLEPPASM. Asn9 carries an N-linked (GlcNAc...) asparagine glycan. The chain crosses the membrane as a helical span at residues 58–82; it reads HYMLGVFYIFLFCASTVGNGMVIWI. Topologically, residues 83–94 are cytoplasmic; the sequence is FSTSKALRTPSN. The chain crosses the membrane as a helical span at residues 95–117; that stretch reads MFVLNLAVFDFIMCLKAPIFIYN. Residues 118 to 133 lie on the Extracellular side of the membrane; sequence SFHRGFALGNTGCQIF. Cys130 and Cys207 are disulfide-bonded. Residues 134 to 153 traverse the membrane as a helical segment; it reads AAIGSYSGIGAGMTNAAIGY. Residues 154–171 are Cytoplasmic-facing; it reads DRLNVITKPMNRNMTFTK. Residues 172–196 form a helical membrane-spanning segment; it reads AIIMNVIIWLYCTPWVVLPLTQFWD. At 197-220 the chain is on the extracellular side; the sequence is RFVPEGYLTSCTFDYLTDNFDTRL. A helical transmembrane segment spans residues 221-248; sequence FVGTIFFFSFVCPTLMIIYYYSQIVGHV. Residues 249–284 are Cytoplasmic-facing; the sequence is FSHEKALREQAKKMNVESLRSNVDKSKDTAEIRIAK. Residues 285–308 traverse the membrane as a helical segment; that stretch reads AAITICFLFFVSWTPYGVMSLIGA. At 309–316 the chain is on the extracellular side; the sequence is FGDKSLLT. The chain crosses the membrane as a helical span at residues 317–341; it reads PGATMIPACTCKLVACIDPFVYAIS. N6-(retinylidene)lysine is present on Lys328. Topologically, residues 342 to 383 are cytoplasmic; sequence HPRYRMELQKRCPWLAIDEKAPESSSAASTTTTQEQQQTTAA. The interval 361-383 is disordered; that stretch reads KAPESSSAASTTTTQEQQQTTAA. Residues 364–383 show a composition bias toward low complexity; the sequence is ESSSAASTTTTQEQQQTTAA.

Belongs to the G-protein coupled receptor 1 family. Opsin subfamily. Post-translationally, phosphorylated on some or all of the serine and threonine residues present in the C-terminal region.

The protein localises to the membrane. Functionally, visual pigments are the light-absorbing molecules that mediate vision. They consist of an apoprotein, opsin, covalently linked to cis-retinal. The sequence is that of Opsin Rh4 (Rh4) from Drosophila virilis (Fruit fly).